A 584-amino-acid chain; its full sequence is Phosphoinositide phospholipase C 7 (584 aa).

An EF-hand-like domain is found at 26–102; sequence EIKTLFDNYS…NSPLSSLEVH (77 aa). Residues 103–248 form the PI-PLC X-box domain; that stretch reads QDMDAPLSHY…LKKRIMISTK (146 aa). Catalysis depends on residues His-118 and His-164. Positions 285 to 318 are disordered; sequence DRSVDKNDSNGDDDDDDDDDDDDDDGDDKIKKNA. Ser-287 carries the post-translational modification Phosphoserine. A compositionally biased stretch (acidic residues) spans 294–311; it reads NGDDDDDDDDDDDDDDGD. The region spanning 323–439 is the PI-PLC Y-box domain; it reads KHLIAIEAGK…GYIKKPDLLL (117 aa). Residues 433 to 566 enclose the C2 domain; the sequence is KKPDLLLKSN…QGIRAVPLRN (134 aa).

Ca(2+) serves as cofactor. Expressed in leaves, roots, flowers and siliques.

The protein localises to the cell membrane. It catalyses the reaction a 1,2-diacyl-sn-glycero-3-phospho-(1D-myo-inositol-4,5-bisphosphate) + H2O = 1D-myo-inositol 1,4,5-trisphosphate + a 1,2-diacyl-sn-glycerol + H(+). Functionally, the production of the second messenger molecules diacylglycerol (DAG) and inositol 1,4,5-trisphosphate (IP3) is mediated by activated phosphatidylinositol-specific phospholipase C enzymes. This chain is Phosphoinositide phospholipase C 7 (PLC7), found in Arabidopsis thaliana (Mouse-ear cress).